Consider the following 185-residue polypeptide: Ribosome-recycling factor (185 aa).

It belongs to the RRF family.

The protein resides in the cytoplasm. Responsible for the release of ribosomes from messenger RNA at the termination of protein biosynthesis. May increase the efficiency of translation by recycling ribosomes from one round of translation to another. The polypeptide is Ribosome-recycling factor (Coxiella burnetii (strain RSA 493 / Nine Mile phase I)).